Consider the following 261-residue polypeptide: Cytochrome c oxidase subunit 3 (261 aa).

Over 1-15 the chain is Mitochondrial matrix; sequence MTHQTHAYHMVNPSP. Residues 16–34 form a helical membrane-spanning segment; sequence WPLTGALSALLMTSGLIMW. Residues 35–40 lie on the Mitochondrial intermembrane side of the membrane; that stretch reads FHFNST. Residues 41-66 form a helical membrane-spanning segment; the sequence is TLLTLGLTTNMLTMYQWWRDVIREST. Residues 67 to 72 lie on the Mitochondrial matrix side of the membrane; sequence FQGHHT. A helical membrane pass occupies residues 73–105; that stretch reads PTVQKGLRYGMILFIISEVLFFTGFFWAFYHSS. Residues 106–128 lie on the Mitochondrial intermembrane side of the membrane; that stretch reads LAPTPELGGCWPPTGIHPLNPLE. A helical transmembrane segment spans residues 129–152; the sequence is VPLLNTSVLLASGVSITWAHHSLM. The Mitochondrial matrix portion of the chain corresponds to 153 to 155; that stretch reads EGN. A helical membrane pass occupies residues 156–183; the sequence is RNPMLQALFITIALGIYFTLLQASEYYE. Residues 184–190 are Mitochondrial intermembrane-facing; the sequence is APFTISD. Residues 191–223 form a helical membrane-spanning segment; the sequence is GVYGSTFFVATGFHGLHVIIGSTFLIVCFFRQL. The Mitochondrial matrix portion of the chain corresponds to 224–232; sequence KFHFTSNHH. Residues 233–256 traverse the membrane as a helical segment; that stretch reads FGFEAAAWYWHFVDVVWLFLYVSI. The Mitochondrial intermembrane portion of the chain corresponds to 257 to 261; the sequence is YWWGS.

Belongs to the cytochrome c oxidase subunit 3 family. As to quaternary structure, component of the cytochrome c oxidase (complex IV, CIV), a multisubunit enzyme composed of 14 subunits. The complex is composed of a catalytic core of 3 subunits MT-CO1, MT-CO2 and MT-CO3, encoded in the mitochondrial DNA, and 11 supernumerary subunits COX4I, COX5A, COX5B, COX6A, COX6B, COX6C, COX7A, COX7B, COX7C, COX8 and NDUFA4, which are encoded in the nuclear genome. The complex exists as a monomer or a dimer and forms supercomplexes (SCs) in the inner mitochondrial membrane with NADH-ubiquinone oxidoreductase (complex I, CI) and ubiquinol-cytochrome c oxidoreductase (cytochrome b-c1 complex, complex III, CIII), resulting in different assemblies (supercomplex SCI(1)III(2)IV(1) and megacomplex MCI(2)III(2)IV(2)).

It localises to the mitochondrion inner membrane. The catalysed reaction is 4 Fe(II)-[cytochrome c] + O2 + 8 H(+)(in) = 4 Fe(III)-[cytochrome c] + 2 H2O + 4 H(+)(out). In terms of biological role, component of the cytochrome c oxidase, the last enzyme in the mitochondrial electron transport chain which drives oxidative phosphorylation. The respiratory chain contains 3 multisubunit complexes succinate dehydrogenase (complex II, CII), ubiquinol-cytochrome c oxidoreductase (cytochrome b-c1 complex, complex III, CIII) and cytochrome c oxidase (complex IV, CIV), that cooperate to transfer electrons derived from NADH and succinate to molecular oxygen, creating an electrochemical gradient over the inner membrane that drives transmembrane transport and the ATP synthase. Cytochrome c oxidase is the component of the respiratory chain that catalyzes the reduction of oxygen to water. Electrons originating from reduced cytochrome c in the intermembrane space (IMS) are transferred via the dinuclear copper A center (CU(A)) of subunit 2 and heme A of subunit 1 to the active site in subunit 1, a binuclear center (BNC) formed by heme A3 and copper B (CU(B)). The BNC reduces molecular oxygen to 2 water molecules using 4 electrons from cytochrome c in the IMS and 4 protons from the mitochondrial matrix. The protein is Cytochrome c oxidase subunit 3 (MT-CO3) of Madoqua guentheri (Guenther's dik-dik).